The sequence spans 544 residues: Chaperonin GroEL 1 (544 aa).

ATP-binding positions include threonine 30–proline 33, lysine 51, aspartate 87–threonine 91, glycine 415, aspartate 481–leucine 483, and aspartate 497.

It belongs to the chaperonin (HSP60) family. Forms a cylinder of 14 subunits composed of two heptameric rings stacked back-to-back. Interacts with the co-chaperonin GroES.

It localises to the cytoplasm. It catalyses the reaction ATP + H2O + a folded polypeptide = ADP + phosphate + an unfolded polypeptide.. Its function is as follows. Together with its co-chaperonin GroES, plays an essential role in assisting protein folding. The GroEL-GroES system forms a nano-cage that allows encapsulation of the non-native substrate proteins and provides a physical environment optimized to promote and accelerate protein folding. The polypeptide is Chaperonin GroEL 1 (Chlamydia caviae (strain ATCC VR-813 / DSM 19441 / 03DC25 / GPIC) (Chlamydophila caviae)).